Here is a 606-residue protein sequence, read N- to C-terminus: Sporulation kinase A (606 aa).

Residues 3–73 (QDTQHVKPLQ…SYFYNEHHLM (71 aa)) form the PAS 1 domain. The PAC 1 domain maps to 77 to 116 (FRFIKKDHTIVWVEAAVEIVTTRAERTEREIILKMKVLEE). One can recognise a PAS 2 domain in the interval 140-214 (YITDDYERLV…IRMQKGMEVG (75 aa)). The 38-residue stretch at 218–255 (QTWKRLDGTPVHLEVKASPTVYKNQQAELLLLIDISSR) folds into the PAC 2 domain. A PAS 3 domain is found at 265 to 335 (SRERYQLLIQ…ERIQNIAEQK (71 aa)). The Histidine kinase domain maps to 402 to 606 (GIAHEIRNPL…TAFKISFPKK (205 aa)). Phosphohistidine; by autocatalysis is present on His405.

It catalyses the reaction ATP + protein L-histidine = ADP + protein N-phospho-L-histidine.. In terms of biological role, phosphorylates the sporulation-regulatory proteins spo0A and spo0F. It also autophosphorylates in the presence of ATP. This Bacillus subtilis (strain 168) protein is Sporulation kinase A (kinA).